Consider the following 737-residue polypeptide: 1,4-alpha-glucan branching enzyme GlgB (737 aa).

The active-site Nucleophile is Asp419. The active-site Proton donor is Glu472.

Belongs to the glycosyl hydrolase 13 family. GlgB subfamily. As to quaternary structure, monomer.

It carries out the reaction Transfers a segment of a (1-&gt;4)-alpha-D-glucan chain to a primary hydroxy group in a similar glucan chain.. Its pathway is glycan biosynthesis; glycogen biosynthesis. Its function is as follows. Catalyzes the formation of the alpha-1,6-glucosidic linkages in glycogen by scission of a 1,4-alpha-linked oligosaccharide from growing alpha-1,4-glucan chains and the subsequent attachment of the oligosaccharide to the alpha-1,6 position. In Mesorhizobium japonicum (strain LMG 29417 / CECT 9101 / MAFF 303099) (Mesorhizobium loti (strain MAFF 303099)), this protein is 1,4-alpha-glucan branching enzyme GlgB.